We begin with the raw amino-acid sequence, 90 residues long: Probable Fe(2+)-trafficking protein (90 aa).

It belongs to the Fe(2+)-trafficking protein family.

Functionally, could be a mediator in iron transactions between iron acquisition and iron-requiring processes, such as synthesis and/or repair of Fe-S clusters in biosynthetic enzymes. This chain is Probable Fe(2+)-trafficking protein, found in Methylococcus capsulatus (strain ATCC 33009 / NCIMB 11132 / Bath).